The sequence spans 442 residues: tRNA-2-methylthio-N(6)-dimethylallyladenosine synthase (442 aa).

An MTTase N-terminal domain is found at 5–122; that stretch reads KKVFIKTLGC…LPEMIKQKQK (118 aa). [4Fe-4S] cluster is bound by residues Cys-14, Cys-51, Cys-85, Cys-159, Cys-163, and Cys-166. Positions 145 to 378 constitute a Radical SAM core domain; that stretch reads KAEGAKAYVS…DLLNSNAQII (234 aa). Residues 380–442 form the TRAM domain; that stretch reads RQMVGTNQRI…LPNSLRGELI (63 aa).

Belongs to the methylthiotransferase family. MiaB subfamily. In terms of assembly, monomer. The cofactor is [4Fe-4S] cluster.

The protein localises to the cytoplasm. The enzyme catalyses N(6)-dimethylallyladenosine(37) in tRNA + (sulfur carrier)-SH + AH2 + 2 S-adenosyl-L-methionine = 2-methylsulfanyl-N(6)-dimethylallyladenosine(37) in tRNA + (sulfur carrier)-H + 5'-deoxyadenosine + L-methionine + A + S-adenosyl-L-homocysteine + 2 H(+). Functionally, catalyzes the methylthiolation of N6-(dimethylallyl)adenosine (i(6)A), leading to the formation of 2-methylthio-N6-(dimethylallyl)adenosine (ms(2)i(6)A) at position 37 in tRNAs that read codons beginning with uridine. This Francisella tularensis subsp. tularensis (strain FSC 198) protein is tRNA-2-methylthio-N(6)-dimethylallyladenosine synthase.